Consider the following 235-residue polypeptide: Probable transcriptional regulatory protein CFF8240_0424 (235 aa).

It belongs to the TACO1 family.

Its subcellular location is the cytoplasm. In Campylobacter fetus subsp. fetus (strain 82-40), this protein is Probable transcriptional regulatory protein CFF8240_0424.